We begin with the raw amino-acid sequence, 131 residues long: Sperm microtubule inner protein 11 (131 aa).

The disordered stretch occupies residues Lys-18–Gly-44. A compositionally biased stretch (basic and acidic residues) spans Asn-21–Pro-33.

Microtubule inner protein component of sperm flagellar doublet microtubules.

The protein localises to the cytoplasm. The protein resides in the cytoskeleton. Its subcellular location is the flagellum axoneme. Its function is as follows. Microtubule inner protein (MIP) part of the dynein-decorated doublet microtubules (DMTs) in flagellum axoneme. May serve to reinforce and thus stabilize the microtubule structure in the sperm flagella. In Homo sapiens (Human), this protein is Sperm microtubule inner protein 11.